A 219-amino-acid polypeptide reads, in one-letter code: Holliday junction branch migration complex subunit RuvA (219 aa).

A domain I region spans residues 1-71; that stretch reads MISWIKGELV…EDSDMLFGFS (71 aa). The tract at residues 72 to 150 is domain II; sequence TKDQRDFFIQ…NKEIEKENLN (79 aa). The segment at 151-161 is flexible linker; that stretch reads INNFLEKNKDL. Residues 161-219 are domain III; sequence LDSIFKDIDLTLQSLNYSKKEIKNLFPKLINNIKNSSLEKESISFENLLKEAMNYLDHK.

The protein belongs to the RuvA family. Homotetramer. Forms an RuvA(8)-RuvB(12)-Holliday junction (HJ) complex. HJ DNA is sandwiched between 2 RuvA tetramers; dsDNA enters through RuvA and exits via RuvB. An RuvB hexamer assembles on each DNA strand where it exits the tetramer. Each RuvB hexamer is contacted by two RuvA subunits (via domain III) on 2 adjacent RuvB subunits; this complex drives branch migration. In the full resolvosome a probable DNA-RuvA(4)-RuvB(12)-RuvC(2) complex forms which resolves the HJ.

It is found in the cytoplasm. The RuvA-RuvB-RuvC complex processes Holliday junction (HJ) DNA during genetic recombination and DNA repair, while the RuvA-RuvB complex plays an important role in the rescue of blocked DNA replication forks via replication fork reversal (RFR). RuvA specifically binds to HJ cruciform DNA, conferring on it an open structure. The RuvB hexamer acts as an ATP-dependent pump, pulling dsDNA into and through the RuvAB complex. HJ branch migration allows RuvC to scan DNA until it finds its consensus sequence, where it cleaves and resolves the cruciform DNA. The chain is Holliday junction branch migration complex subunit RuvA from Prochlorococcus marinus subsp. pastoris (strain CCMP1986 / NIES-2087 / MED4).